Here is a 369-residue protein sequence, read N- to C-terminus: Anhydro-N-acetylmuramic acid kinase (369 aa).

Residue 12-19 (GTSMDGVD) coordinates ATP.

Belongs to the anhydro-N-acetylmuramic acid kinase family.

It catalyses the reaction 1,6-anhydro-N-acetyl-beta-muramate + ATP + H2O = N-acetyl-D-muramate 6-phosphate + ADP + H(+). The protein operates within amino-sugar metabolism; 1,6-anhydro-N-acetylmuramate degradation. Its pathway is cell wall biogenesis; peptidoglycan recycling. In terms of biological role, catalyzes the specific phosphorylation of 1,6-anhydro-N-acetylmuramic acid (anhMurNAc) with the simultaneous cleavage of the 1,6-anhydro ring, generating MurNAc-6-P. Is required for the utilization of anhMurNAc either imported from the medium or derived from its own cell wall murein, and thus plays a role in cell wall recycling. The polypeptide is Anhydro-N-acetylmuramic acid kinase (Shewanella baltica (strain OS185)).